The sequence spans 315 residues: MLEIEKPKIECVENAEDGSYGKFVIEPLERGYGITLGNALRRILLSSLPGVAADHIKIDSVLHEFSTVQGVKEDVTELILNIKCLALTMNGEGPKTIYIDEVGPKEVTAADIKTDGDVEVINKDLHIATLDENGKMYMEINVNRGRGYVTQNKNKTKDMPIGSIAVDSIYTPVKRVNFSVENTRVGQITDYDKLTIEVWTNGTIRPEEAVSLSAKILIEHFKLFMTLTDHADDMEIMVEKEEDKKEKVLEMTIEELDLSVRSYNCLKRAGINTVQELCERSMDDMMKVRNLGKKSLEEVEQKLEALGLGLRKSED.

Residues methionine 1–threonine 228 are alpha N-terminal domain (alpha-NTD). An alpha C-terminal domain (alpha-CTD) region spans residues lysine 245–aspartate 315.

Belongs to the RNA polymerase alpha chain family. Homodimer. The RNAP catalytic core consists of 2 alpha, 1 beta, 1 beta' and 1 omega subunit. When a sigma factor is associated with the core the holoenzyme is formed, which can initiate transcription.

The enzyme catalyses RNA(n) + a ribonucleoside 5'-triphosphate = RNA(n+1) + diphosphate. DNA-dependent RNA polymerase catalyzes the transcription of DNA into RNA using the four ribonucleoside triphosphates as substrates. The protein is DNA-directed RNA polymerase subunit alpha of Clostridium botulinum (strain Langeland / NCTC 10281 / Type F).